A 263-amino-acid polypeptide reads, in one-letter code: Endolytic peptidoglycan transglycosylase RlpA (263 aa).

The N-terminal stretch at Met1–Gly16 is a signal peptide. A lipid anchor (N-palmitoyl cysteine) is attached at Cys17. Cys17 is lipidated: S-diacylglycerol cysteine. The 76-residue stretch at Lys182 to Thr257 folds into the SPOR domain.

Belongs to the RlpA family.

Its subcellular location is the cell membrane. Functionally, lytic transglycosylase with a strong preference for naked glycan strands that lack stem peptides. The protein is Endolytic peptidoglycan transglycosylase RlpA of Vibrio cholerae serotype O1 (strain ATCC 39315 / El Tor Inaba N16961).